The chain runs to 446 residues: MNHEGSRSLYDRALSVLPGGVNSAVRAAPQPYPVFADHGDGGHVIDADGNRYIDWIQGLGPLLLGHDMPEQLQAAVQSRASEGPMYGMPSEIEVEHAEFVCRHVPSVEMIRFVNSGTEATVSACRLARAATGRNKIVVMQGGYHGAQESTLVEGDADDVAPSSAGIPQSFAEHTIPVPFNDPEAASEVFRAHGDDIAAVLVEPVQANMGIVYPEDGYHEALRSLCDDYGSLLIFDEVITGFRVGGLQCAQGKFDIDPDITTFGKIIGGGFPVGAIGGKTEYIEQFTPSGDVFQAGTFSGHPVTMAAGLETLKFCAEEDVYDHVNELGRQLREGLSDIVADQAPEYTVVGTDSLFKVVFTRGDGTPQGEACRNGCRQSSDCSRYGTCPTSATDVRDAETDRYARLFRPKMIEEGVLVSQNQFESNFVSYRHTAEDVEETLEAYKEAL.

Lys-264 bears the N6-(pyridoxal phosphate)lysine mark.

Belongs to the class-III pyridoxal-phosphate-dependent aminotransferase family. HemL subfamily. Pyridoxal 5'-phosphate is required as a cofactor.

Its subcellular location is the cytoplasm. It carries out the reaction (S)-4-amino-5-oxopentanoate = 5-aminolevulinate. The protein operates within porphyrin-containing compound metabolism; protoporphyrin-IX biosynthesis; 5-aminolevulinate from L-glutamyl-tRNA(Glu): step 2/2. This Natronomonas pharaonis (strain ATCC 35678 / DSM 2160 / CIP 103997 / JCM 8858 / NBRC 14720 / NCIMB 2260 / Gabara) (Halobacterium pharaonis) protein is Glutamate-1-semialdehyde 2,1-aminomutase.